Reading from the N-terminus, the 269-residue chain is Autophagy-related protein 5 (269 aa).

Lys102 is covalently cross-linked (Glycyl lysine isopeptide (Lys-Gly) (interchain with G-Cter in ATG12)).

This sequence belongs to the ATG5 family. As to quaternary structure, conjugated with ATG12. The ATG5-ATG12 conjugate forms a complex with several units of ATG16. The ATG12-ATG5 conjugate also associates with ATG3. In terms of processing, conjugated to ATG12; which is essential for autophagy. Conjugation with ATG12 involves ATG7 as an E1-like activating enzyme and ATG10 as an E2-like conjugating enzyme.

The protein resides in the preautophagosomal structure membrane. Involved in cytoplasm to vacuole transport (Cvt) and autophagic vesicle formation. Autophagy is essential for maintenance of amino acid levels and protein synthesis under nitrogen starvation. Required for selective autophagic degradation of the nucleus (nucleophagy). Also required for mitophagy, which eliminates defective or superfluous mitochondria in order to fulfill cellular energy requirements and prevent excess ROS production. Conjugation with ATG12, through a ubiquitin-like conjugating system involving ATG7 as an E1-like activating enzyme and ATG10 as an E2-like conjugating enzyme, is essential for its function. The ATG12-ATG5 conjugate acts as an E3-like enzyme which is required for lipidation of ATG8 and ATG8 association to the vesicle membranes. ATG12-ATG5 rearranges the ATG3 catalytic center and enhances its E2 activity. Required for proper vegetative growth, asexual/sexual reproduction, but, unlike several plant and animal pathogenic fungi, where ATG5 is required for infection, in B.bassiana it is dispensable for pathogenesis. In Beauveria bassiana (strain ARSEF 2860) (White muscardine disease fungus), this protein is Autophagy-related protein 5.